We begin with the raw amino-acid sequence, 1172 residues long: WD repeat-containing protein 48 homolog (1172 aa).

Residues 1 to 115 form a disordered region; it reads MYEYYSTGKI…HSYGGGGGGT (115 aa). The segment covering 13-36 has biased composition (polar residues); the sequence is LPQQVDSNGINSKPMNSSPSTPIP. Positions 37-63 are enriched in low complexity; that stretch reads NNNNNNNNNNNNNNNNNNNNNNNNNNN. Polar residues predominate over residues 64–89; sequence RNKSQQSFYLNNNNRNCGFSSPTKPQ. Residues 90–107 are compositionally biased toward low complexity; it reads YNNNNNNNNNNNSNYNHS. WD repeat units follow at residues 152–202, 208–246, 249–548, 560–599, 602–641, 645–683, and 686–727; these read RHCF…GFKF, DHTDWVNDLFFNDSNILVSCSSDSTIKIWNTDSERCVNS, FHDD…SPMF, GEGISIYSLAIAQDASFVVSGSTERAIRGWDVRSGQKIFK, GHTDNIRSILLNDNSTRCLSASSDGTVRLWDIGEQRCIQV, LHTDSVWTLATNDSFSHFFSGGRDGMIFLTDLKTHQSRL, and RENE…NQSI. Low complexity predominate over residues 341 to 365; that stretch reads ISTNNNNNNSSSSNNNNNNNNNNNN. The tract at residues 341–544 is disordered; that stretch reads ISTNNNNNNS…NDNNNLNKKF (204 aa). Polar residues-rich tracts occupy residues 366 to 377, 388 to 408, and 417 to 434; these read GQTNTHENTAET, QLSSVNKNGIRSNLSNNNFRN, and PPSSVLNHTPKILSSNGR. Residues 435 to 485 are compositionally biased toward low complexity; the sequence is NVNNRENNNNNNNNNNNNNNNNNNNNNNNNNNNNNNNNNINNNNHENNGNV. Over residues 486–503 the composition is skewed to acidic residues; the sequence is DVDDEDDDDDDDDDDDDD. Residues 504 to 513 show a composition bias toward basic and acidic residues; it reads CNKNKKKYDD. Residues 514 to 543 show a composition bias toward low complexity; the sequence is NNNNNNYNNNNNKKNNSNDNNNDNNNLNKK. Residues 745 to 769 are compositionally biased toward low complexity; the sequence is NNNNNNNNNNNNNNNNNNNNNNNNN. A disordered region spans residues 745–775; it reads NNNNNNNNNNNNNNNNNNNNNNNNNNREKLS. The stretch at 794-833 is one WD 8 repeat; that stretch reads QGRAGIIKNQVLNNRRQVLTKDNDNNVQLWDITKGKEIES. The interval 926–986 is disordered; that stretch reads ELNHSNDSVN…TNSTTPNSGR (61 aa). Low complexity predominate over residues 930–984; that stretch reads SNDSVNSSLSSNTSGDNNNNNYNNYNNYNNNNNNGLQKSSSSSSIVSTNSTTPNS.

The protein belongs to the WD repeat WDR48 family.

This is WD repeat-containing protein 48 homolog from Dictyostelium discoideum (Social amoeba).